The following is a 693-amino-acid chain: Translation initiation factor IF-2 (693 aa).

In terms of domain architecture, tr-type G spans 181–349 (PRPPVVTVMG…MILLVAEMNE (169 aa)). The interval 190-197 (GHVDHGKT) is G1. 190–197 (GHVDHGKT) lines the GTP pocket. Residues 215–219 (GITQS) are G2. Residues 236–239 (DTPG) form a G3 region. GTP contacts are provided by residues 236 to 240 (DTPGH) and 290 to 293 (NKID). The segment at 290–293 (NKID) is G4. The tract at residues 327–329 (SAR) is G5.

Belongs to the TRAFAC class translation factor GTPase superfamily. Classic translation factor GTPase family. IF-2 subfamily.

It localises to the cytoplasm. In terms of biological role, one of the essential components for the initiation of protein synthesis. Protects formylmethionyl-tRNA from spontaneous hydrolysis and promotes its binding to the 30S ribosomal subunits. Also involved in the hydrolysis of GTP during the formation of the 70S ribosomal complex. The sequence is that of Translation initiation factor IF-2 from Thermotoga petrophila (strain ATCC BAA-488 / DSM 13995 / JCM 10881 / RKU-1).